Consider the following 507-residue polypeptide: Transcription factor NIGTH1 (507 aa).

Disordered regions lie at residues 139-172 and 238-268; these read ASAA…TALD and SREA…RKAR. A compositionally biased stretch (basic and acidic residues) spans 152–161; sequence PKEHSEHHPL. Residues 263–323 enclose the HTH myb-type domain; the sequence is PHRKARRCWS…HLQKYRLHTR (61 aa). A DNA-binding region (H-T-H motif) is located at residues 294-319; that stretch reads PKQIRELMKVDGLTNDEVKSHLQKYR. The disordered stretch occupies residues 402-507; that stretch reads AVAPPPPLPP…TTTSAGAINY (106 aa). The span at 412–433 shows a compositional bias: low complexity; the sequence is QQQLAPPYSAKSSASARLGSPD. Over residues 437 to 446 the composition is skewed to gly residues; it reads RGSGGGGGAA. Acidic residues predominate over residues 456-476; sequence ESIEEEGEGEEREDDDDDDEM.

Interacts with ACA5.

The protein resides in the nucleus. Its function is as follows. Probable transcription factor that may play a role in regulatory networks controlling development and metabolism. This Oryza sativa subsp. japonica (Rice) protein is Transcription factor NIGTH1.